The following is a 373-amino-acid chain: MIELVTDSPHPIHLVDSLQNPKLFASLSTDFPLIFITNTKLNALILPPLLDLARSLGFSVETLTIPEGEETKTGDTFLSLHQQLTDLNVPRQATLIGVGGGVILDIAGFVAATHCRGMPFIAIPTTLVAMIDASIGGKNGINLNHIKNRIGSFYLPKAVWICPRKLSFLPQQELHHGIAECIKHAYIADSAILPLLQDPNALKKEDKLSLLIKKNCLCKASVVQQDVRDYAKRQILNFGHTLGHALEMLFIGKIPHSCAISVGMVLETKLSLSLGVARSPAILHSLIQDLLRYQLPVSLKDLYMRAQIPPHNCDQILSALTYDKKKQNTPLPPFVMIEEIGLAASFDGRFCQTISKHILTKVLEEEFYAMHNN.

Residues 67–72, 101–105, 125–126, lysine 138, and lysine 147 each bind NAD(+); these read EGEETK, GVILD, and TT. Positions 180, 240, and 256 each coordinate Zn(2+).

It belongs to the sugar phosphate cyclases superfamily. Dehydroquinate synthase family. It depends on NAD(+) as a cofactor. Requires Co(2+) as cofactor. Zn(2+) serves as cofactor.

It localises to the cytoplasm. The catalysed reaction is 7-phospho-2-dehydro-3-deoxy-D-arabino-heptonate = 3-dehydroquinate + phosphate. It participates in metabolic intermediate biosynthesis; chorismate biosynthesis; chorismate from D-erythrose 4-phosphate and phosphoenolpyruvate: step 2/7. Its function is as follows. Catalyzes the conversion of 3-deoxy-D-arabino-heptulosonate 7-phosphate (DAHP) to dehydroquinate (DHQ). The sequence is that of 3-dehydroquinate synthase from Chlamydia trachomatis serovar A (strain ATCC VR-571B / DSM 19440 / HAR-13).